A 508-amino-acid polypeptide reads, in one-letter code: Protoporphyrinogen oxidase 2, chloroplastic/mitochondrial (508 aa).

A chloroplast and mitochondrion-targeting transit peptide spans 1–22 (MASGAVADHQIEAVSGKRVAVV). FAD-binding positions include 23–28 (GAGVSG), 46–47 (EA), and 68–71 (GANT). Residues 219 to 239 (KGGKSRDTKSSPGTKKGSRGS) are disordered. Residues valine 268 and 475 to 477 (LSV) contribute to the FAD site.

Belongs to the protoporphyrinogen/coproporphyrinogen oxidase family. Protoporphyrinogen oxidase subfamily. FAD is required as a cofactor.

The protein resides in the plastid. The protein localises to the chloroplast. It is found in the mitochondrion. It carries out the reaction protoporphyrinogen IX + 3 O2 = protoporphyrin IX + 3 H2O2. Its pathway is porphyrin-containing compound metabolism; protoporphyrin-IX biosynthesis; protoporphyrin-IX from protoporphyrinogen-IX: step 1/1. It participates in porphyrin-containing compound metabolism; chlorophyll biosynthesis. Catalyzes the 6-electron oxidation of protoporphyrinogen-IX to form protoporphyrin-IX. This chain is Protoporphyrinogen oxidase 2, chloroplastic/mitochondrial (PPOX2), found in Arabidopsis thaliana (Mouse-ear cress).